Consider the following 286-residue polypeptide: Acetylglutamate kinase (286 aa).

Substrate is bound by residues 70-71, Arg92, and Asn184; that span reads GG.

The protein belongs to the acetylglutamate kinase family. ArgB subfamily.

The protein resides in the cytoplasm. The catalysed reaction is N-acetyl-L-glutamate + ATP = N-acetyl-L-glutamyl 5-phosphate + ADP. It participates in amino-acid biosynthesis; L-arginine biosynthesis; N(2)-acetyl-L-ornithine from L-glutamate: step 2/4. Functionally, catalyzes the ATP-dependent phosphorylation of N-acetyl-L-glutamate. This Ruegeria sp. (strain TM1040) (Silicibacter sp.) protein is Acetylglutamate kinase.